Reading from the N-terminus, the 308-residue chain is Aspartate carbamoyltransferase catalytic subunit (308 aa).

The carbamoyl phosphate site is built by Arg-55 and Thr-56. Residue Lys-83 coordinates L-aspartate. Arg-105, His-133, and Gln-136 together coordinate carbamoyl phosphate. L-aspartate is bound by residues Arg-166 and Arg-220. Carbamoyl phosphate-binding residues include Gly-261 and Pro-262.

Belongs to the aspartate/ornithine carbamoyltransferase superfamily. ATCase family. Heterododecamer (2C3:3R2) of six catalytic PyrB chains organized as two trimers (C3), and six regulatory PyrI chains organized as three dimers (R2).

The enzyme catalyses carbamoyl phosphate + L-aspartate = N-carbamoyl-L-aspartate + phosphate + H(+). It functions in the pathway pyrimidine metabolism; UMP biosynthesis via de novo pathway; (S)-dihydroorotate from bicarbonate: step 2/3. Catalyzes the condensation of carbamoyl phosphate and aspartate to form carbamoyl aspartate and inorganic phosphate, the committed step in the de novo pyrimidine nucleotide biosynthesis pathway. The sequence is that of Aspartate carbamoyltransferase catalytic subunit from Chlorobium phaeobacteroides (strain DSM 266 / SMG 266 / 2430).